The primary structure comprises 640 residues: Threonine--tRNA ligase (640 aa).

The TGS domain maps to Met1–Thr61. Residues Asp242 to Pro533 are catalytic. 3 residues coordinate Zn(2+): Cys333, His384, and His510.

Belongs to the class-II aminoacyl-tRNA synthetase family. Homodimer. Requires Zn(2+) as cofactor.

The protein localises to the cytoplasm. The catalysed reaction is tRNA(Thr) + L-threonine + ATP = L-threonyl-tRNA(Thr) + AMP + diphosphate + H(+). In terms of biological role, catalyzes the attachment of threonine to tRNA(Thr) in a two-step reaction: L-threonine is first activated by ATP to form Thr-AMP and then transferred to the acceptor end of tRNA(Thr). Also edits incorrectly charged L-seryl-tRNA(Thr). The chain is Threonine--tRNA ligase from Polynucleobacter necessarius subsp. necessarius (strain STIR1).